The chain runs to 141 residues: Putative antiporter subunit mnhB2 (141 aa).

4 helical membrane passes run 10–30 (TVTK…FFAG), 35–55 (GGGF…FLAF), 70–90 (ILMI…MFFG), and 114–134 (ITLF…TVML).

The protein belongs to the CPA3 antiporters (TC 2.A.63) subunit B family. May form a heterooligomeric complex that consists of seven subunits: mnhA2, mnhB2, mnhC2, mnhD2, mnhE2, mnhF2 and mnhG2.

It is found in the cell membrane. The chain is Putative antiporter subunit mnhB2 (mnhB2) from Staphylococcus aureus (strain Mu3 / ATCC 700698).